Consider the following 263-residue polypeptide: 3-methyl-2-oxobutanoate hydroxymethyltransferase (263 aa).

Mg(2+) contacts are provided by Asp-45 and Asp-84. 3-methyl-2-oxobutanoate-binding positions include 45–46 (DS), Asp-84, and Lys-112. Position 114 (Glu-114) interacts with Mg(2+). Glu-180 serves as the catalytic Proton acceptor.

It belongs to the PanB family. As to quaternary structure, homodecamer; pentamer of dimers. Mg(2+) serves as cofactor.

The protein resides in the cytoplasm. The catalysed reaction is 3-methyl-2-oxobutanoate + (6R)-5,10-methylene-5,6,7,8-tetrahydrofolate + H2O = 2-dehydropantoate + (6S)-5,6,7,8-tetrahydrofolate. It functions in the pathway cofactor biosynthesis; (R)-pantothenate biosynthesis; (R)-pantoate from 3-methyl-2-oxobutanoate: step 1/2. Functionally, catalyzes the reversible reaction in which hydroxymethyl group from 5,10-methylenetetrahydrofolate is transferred onto alpha-ketoisovalerate to form ketopantoate. This Klebsiella pneumoniae subsp. pneumoniae (strain ATCC 700721 / MGH 78578) protein is 3-methyl-2-oxobutanoate hydroxymethyltransferase.